A 185-amino-acid polypeptide reads, in one-letter code: Ribosome-recycling factor (185 aa).

It belongs to the RRF family.

It localises to the cytoplasm. Responsible for the release of ribosomes from messenger RNA at the termination of protein biosynthesis. May increase the efficiency of translation by recycling ribosomes from one round of translation to another. In Thermobifida fusca (strain YX), this protein is Ribosome-recycling factor.